Here is a 966-residue protein sequence, read N- to C-terminus: Collagen alpha-1(I) chain (966 aa).

The tract at residues 1–966 is disordered; that stretch reads SYGYDEKSAG…PGPPGPPGPP (966 aa). Residue K7 is modified to Allysine. S8 carries the phosphoserine modification. A 4-hydroxyproline mark is found at P27, P30, P32, P41, P44, P47, P61, P76, P82, P91, and P97. Over residues 64–78 the composition is skewed to basic and acidic residues; that stretch reads NGDDGEAGKPGRPGE. K100 carries the 5-hydroxylysine; alternate modification. K100 carries an O-linked (Gal...) hydroxylysine; alternate glycan. Position 106 is a phosphoserine (S106). Residues 114-130 are compositionally biased toward low complexity; sequence DAGPAGPKGEPGSPGEN. A 4-hydroxyproline mark is found at P124, P127, P133, P142, P148, P169, P178, P181, P208, P211, P223, P229, P238, P244, P247, and P262. The span at 148 to 166 shows a compositional bias: low complexity; it reads PGASGPAGARGNDGATGAA. The segment covering 168–180 has biased composition (pro residues); the sequence is PPGPTGPAGPPGF. The segment covering 214-253 has biased composition (low complexity); sequence AGAAGPAGNPGADGQPGAKGANGAPGIAGAPGFPGARGPS. K265 bears the 5-hydroxylysine mark. 8 positions are modified to 4-hydroxyproline: P271, P274, P286, P295, P310, P316, P325, and P331. Residues 320 to 329 show a composition bias toward gly residues; it reads GERGGPGSRG. Position 340 is a 5-hydroxylysine (K340). 4-hydroxyproline is present on residues P349, P358, P364, P370, P379, P382, P391, P400, P406, P418, P427, P436, P439, P457, P475, P481, P487, P493, P499, P505, P517, P526, P538, P542, P548, P554, and P563. Over residues 373–399 the composition is skewed to low complexity; the sequence is KGLTGSPGSPGPDGKTGPPGPAGQDGR. Residues 408 to 427 are compositionally biased toward low complexity; sequence ARGQAGVMGFPGPKGAAGEP. Residues 469-496 show a composition bias toward low complexity; the sequence is QGPAGSPGFQGLPGPAGPPGEAGKPGEQ. A 5-hydroxylysine modification is found at K575. 4-hydroxyproline is present on residues P581, P596, and P602. Over residues 608-622 the composition is skewed to low complexity; it reads SGPSGPAGPTGARGA. S611 is subject to Phosphoserine. A 4-hydroxyproline mark is found at P623, P629, P632, P641, P647, P665, P674, and P683. Positions 635-662 are enriched in low complexity; sequence AGFAGPPGADGQPGAKGEPGDAGAKGDA. Residues 664–676 show a composition bias toward pro residues; that stretch reads PPGPAGPTGPPGP. K686 carries the 5-hydroxylysine modification. The segment covering 691–707 has biased composition (low complexity); the sequence is SAGPPGATGFPGAAGRV. 4-hydroxyproline occurs at positions 695 and 701. P709 carries the 3-hydroxyproline modification. A 4-hydroxyproline mark is found at P710, P719, P722, P746, P755, P773, P782, P785, P791, P806, P812, P818, P826, and P832. Over residues 736 to 755 the composition is skewed to low complexity; the sequence is ETGPAGEKGSPGADGPAGAP. Residues 805–815 show a composition bias toward pro residues; it reads PPGPVGPPGLA. The segment covering 824–835 has biased composition (gly residues); sequence EGPGAEGSPGRG. Residues 852 to 866 show a composition bias toward low complexity; sequence AGPAGARGPAGPQGP. The segment covering 867-881 has biased composition (basic and acidic residues); it reads RGDKGETGEQGDRGI. At K870 the chain carries 5-hydroxylysine. A 5-hydroxylysine; alternate modification is found at K882. K882 carries an O-linked (Gal...) hydroxylysine; alternate glycan. 4 positions are modified to 4-hydroxyproline: P897, P900, P918, and P933. Positions 900–933 are enriched in low complexity; it reads PGEQGPSGASGPAGPRGPPGSAGSPGKDGLNGLP. At P938 the chain carries 3-hydroxyproline. P939 carries the post-translational modification 4-hydroxyproline. Over residues 951–966 the composition is skewed to pro residues; the sequence is VGPPGPPGPPGPPGPP. 3-hydroxyproline is present on P953. P954 bears the 4-hydroxyproline mark. The residue at position 956 (P956) is a 3-hydroxyproline. A 4-hydroxyproline modification is found at P957. P959 bears the 3-hydroxyproline mark. P960, P963, and P966 each carry 4-hydroxyproline.

It belongs to the fibrillar collagen family. As to quaternary structure, trimers of one alpha 2(I) and two alpha 1(I) chains. Post-translationally, contains mostly 4-hydroxyproline. Proline residues at the third position of the tripeptide repeating unit (G-X-Y) are hydroxylated in some or all of the chains. Contains 3-hydroxyproline at a few sites. This modification occurs on the first proline residue in the sequence motif Gly-Pro-Hyp, where Hyp is 4-hydroxyproline. In terms of processing, lysine residues at the third position of the tripeptide repeating unit (G-X-Y) are 5-hydroxylated in some or all of the chains. Post-translationally, O-glycosylated on hydroxylated lysine residues. The O-linked glycan consists of a Glc-Gal disaccharide. In terms of tissue distribution, expressed in bones.

It is found in the secreted. It localises to the extracellular space. Its subcellular location is the extracellular matrix. In terms of biological role, type I collagen is a member of group I collagen (fibrillar forming collagen). The sequence is that of Collagen alpha-1(I) chain from Bradypus variegatus (Brown-throated three-fingered sloth).